The primary structure comprises 147 residues: Large ribosomal subunit protein uL15 (147 aa).

A compositionally biased stretch (basic and acidic residues) spans 1 to 13; sequence MELHSLKAAEGSR. Residues 1–57 form a disordered region; that stretch reads MELHSLKAAEGSRKVRNRVGRGTSSGNGKTSGRGQKGQKSRSGGGVRPGFEGGQTEL. Gly residues-rich tracts occupy residues 23 to 35 and 42 to 52; these read TSSG…GRGQ and SGGGVRPGFEG.

This sequence belongs to the universal ribosomal protein uL15 family. As to quaternary structure, part of the 50S ribosomal subunit.

Binds to the 23S rRNA. The sequence is that of Large ribosomal subunit protein uL15 from Lactococcus lactis subsp. lactis (strain IL1403) (Streptococcus lactis).